We begin with the raw amino-acid sequence, 278 residues long: TATA box-binding protein-associated factor RNA polymerase I subunit D (278 aa).

Disordered regions lie at residues 19-71 (LANR…SSFE) and 88-115 (KKRYKKKKKKRYQPTGRPRGRPEGRRNP). S23 carries the phosphoserine modification. Basic residues-rich tracts occupy residues 43 to 53 (REKRNPIRKFV) and 88 to 99 (KKRYKKKKKKRY). Phosphoserine occurs at positions 138 and 234.

Component of the transcription factor SL1/TIF-IB complex, composed of TBP and at least TAF1A, TAF1B, TAF1C and TAF1D. Interacts with UBTF.

The protein localises to the nucleus. Its function is as follows. Component of the transcription factor SL1/TIF-IB complex, which is involved in the assembly of the PIC (preinitiation complex) during RNA polymerase I-dependent transcription. The rate of PIC formation probably is primarily dependent on the rate of association of SL1/TIF-IB with the rDNA promoter. SL1/TIF-IB is involved in stabilization of nucleolar transcription factor 1/UBTF on rDNA. Formation of SL1/TIF-IB excludes the association of TBP with TFIID subunits. In Pongo abelii (Sumatran orangutan), this protein is TATA box-binding protein-associated factor RNA polymerase I subunit D (TAF1D).